A 518-amino-acid chain; its full sequence is MKKLKINYLFIGILALLLAVALWPSIPWFGKADNRIAAIQARGELRVSTIHTPLTYNEINGKPFGLDYELAKQFADYLGVKLKVTVRQNISQLFDDLDNGNADLLAAGLVYNSERVKNYQPGPTYYSVSQQLVYKVGQYRPRTLGNLTAEQLTVAPGHVVVNDLQTLKETKFPELSWKVDDKKGSAELMEDVIEGKLDYTIADSVAISLFQRVHPELAVALDITDEQPVTWFSPLDGDNTLSAALLDFFNEMNEDGTLARIEEKYLGHGDDFDYVDTRTFLRAVDAVLPQLKPLFEKYAEEIDWRLLAAIAYQESHWDAQATSPTGVRGMMMLTKNTAQSLGITDRTDAEQSISGGVRYLQDMMSKVPESVPENERIWFALAAYNMGYAHMLDARALTAKTKGNPDSWADVKQRLPLLSQKPYYSKLTYGYARGHEAYAYVENIRKYQISLVGYLQEKEKQATEAAMQLAQDYPAVSPTELGKEKFPFLSFLSQSSSNYLTHSPSLLFSRKGSEEKQN.

Residues 1–21 (MKKLKINYLFIGILALLLAVA) form the signal peptide. The tract at residues 22-269 (LWPSIPWFGK…RIEEKYLGHG (248 aa)) is non-LT domain. Residues 270–518 (DDFDYVDTRT…SRKGSEEKQN (249 aa)) form an LT domain region. E314 is a catalytic residue.

It in the N-terminal section; belongs to the bacterial solute-binding protein 3 family. In the C-terminal section; belongs to the transglycosylase Slt family.

The protein resides in the cell outer membrane. It carries out the reaction Exolytic cleavage of the (1-&gt;4)-beta-glycosidic linkage between N-acetylmuramic acid (MurNAc) and N-acetylglucosamine (GlcNAc) residues in peptidoglycan, from either the reducing or the non-reducing ends of the peptidoglycan chains, with concomitant formation of a 1,6-anhydrobond in the MurNAc residue.. Its function is as follows. Murein-degrading enzyme that degrades murein glycan strands and insoluble, high-molecular weight murein sacculi, with the concomitant formation of a 1,6-anhydromuramoyl product. Lytic transglycosylases (LTs) play an integral role in the metabolism of the peptidoglycan (PG) sacculus. Their lytic action creates space within the PG sacculus to allow for its expansion as well as for the insertion of various structures such as secretion systems and flagella. The polypeptide is Membrane-bound lytic murein transglycosylase F (Escherichia coli (strain ATCC 8739 / DSM 1576 / NBRC 3972 / NCIMB 8545 / WDCM 00012 / Crooks)).